The sequence spans 885 residues: Translation initiation factor IF-2 (885 aa).

Residues E123–I232 are compositionally biased toward basic and acidic residues. The segment at E123–M289 is disordered. Positions G253–R266 are enriched in basic residues. A compositionally biased stretch (basic and acidic residues) spans G267 to E276. Residues P385–K554 form the tr-type G domain. Positions G394–T401 are G1. G394–T401 provides a ligand contact to GTP. Positions G419–H423 are G2. The interval D440–G443 is G3. GTP-binding positions include D440–H444 and N494–D497. The G4 stretch occupies residues N494–D497. Residues S530–K532 are G5.

It belongs to the TRAFAC class translation factor GTPase superfamily. Classic translation factor GTPase family. IF-2 subfamily.

It localises to the cytoplasm. Its function is as follows. One of the essential components for the initiation of protein synthesis. Protects formylmethionyl-tRNA from spontaneous hydrolysis and promotes its binding to the 30S ribosomal subunits. Also involved in the hydrolysis of GTP during the formation of the 70S ribosomal complex. The chain is Translation initiation factor IF-2 from Shewanella oneidensis (strain ATCC 700550 / JCM 31522 / CIP 106686 / LMG 19005 / NCIMB 14063 / MR-1).